The primary structure comprises 592 residues: Bifunctional purine biosynthesis protein ATIC (592 aa).

N-acetylmethionine is present on Met1. In terms of domain architecture, MGS-like spans 1–146; sequence MAPSQLALFS…KNHARVTVVC (146 aa). Positions 1–198 are IMP cyclohydrolase; it reads MAPSQLALFS…ISDYFRKQYS (198 aa). IMP-binding positions include 12–14, 34–37, 64–67, 101–102, and 125–126; these read SDK, SGGT, RVKT, CN, and DI. Lys137 (proton donor/acceptor; for FAICAR cyclization activity) is an active-site residue. The residue at position 199 (Lys199) is an N6-acetyllysine. The AICAR formyltransferase stretch occupies residues 199–592; it reads KGISQMPLRY…AHTDLRLFHH (394 aa). Residues 207 to 208, His267, Gly316, Asp339, Asn431, and Arg451 each bind 5-amino-1-(5-phospho-beta-D-ribosyl)imidazole-4-carboxamide; that span reads RY. His267 (proton acceptor; for AICAR formyltransferase activity) is an active-site residue. A (6R)-10-formyltetrahydrofolate-binding site is contributed by Ile452. Phe541 is a 5-amino-1-(5-phospho-beta-D-ribosyl)imidazole-4-carboxamide binding site. (6R)-10-formyltetrahydrofolate-binding positions include Asp546 and 565–566; that span reads ST. Residue Arg588 coordinates 5-amino-1-(5-phospho-beta-D-ribosyl)imidazole-4-carboxamide.

It belongs to the PurH family. Homodimer. Associates with internalized INSR complexes on Golgi/endosomal membranes. Interacts with INSR; ATIC together with PRKAA2/AMPK2 and HACD3/PTPLAD1 is proposed to be part of a signaling network regulating INSR autophosphorylation and endocytosis.

Its subcellular location is the cytoplasm. It is found in the cytosol. The enzyme catalyses (6R)-10-formyltetrahydrofolate + 5-amino-1-(5-phospho-beta-D-ribosyl)imidazole-4-carboxamide = 5-formamido-1-(5-phospho-D-ribosyl)imidazole-4-carboxamide + (6S)-5,6,7,8-tetrahydrofolate. It catalyses the reaction 10-formyldihydrofolate + 5-amino-1-(5-phospho-beta-D-ribosyl)imidazole-4-carboxamide = 5-formamido-1-(5-phospho-D-ribosyl)imidazole-4-carboxamide + 7,8-dihydrofolate. The catalysed reaction is IMP + H2O = 5-formamido-1-(5-phospho-D-ribosyl)imidazole-4-carboxamide. It participates in purine metabolism; IMP biosynthesis via de novo pathway; 5-formamido-1-(5-phospho-D-ribosyl)imidazole-4-carboxamide from 5-amino-1-(5-phospho-D-ribosyl)imidazole-4-carboxamide (10-formyl THF route): step 1/1. Its pathway is purine metabolism; IMP biosynthesis via de novo pathway; IMP from 5-formamido-1-(5-phospho-D-ribosyl)imidazole-4-carboxamide: step 1/1. Its activity is regulated as follows. AMP and XMP inhibit AICAR formyltransferase activity. AICAR formyltransferase activity is inhibited by N-(6-fluoro-1-oxo-1,2-dihydroisoquinolin-7-yl)-5- [(3R)-3-hydroxypyrrolidin-1-yl]thiophene-2-sulfonamide (LSN 3213128), which acts as a tumor suppression in cancer cell lines. Functionally, bifunctional enzyme that catalyzes the last two steps of purine biosynthesis. Acts as a transformylase that incorporates a formyl group to the AMP analog AICAR (5-amino-1-(5-phospho-beta-D-ribosyl)imidazole-4-carboxamide) to produce the intermediate formyl-AICAR (FAICAR). Also displays cyclohydrolase activity involving the cyclization of FAICAR to inosine monophosphate (IMP). Can use both 10-formyldihydrofolate and 10-formyltetrahydrofolate as the formyl donor in this reaction. Also catalyzes the cyclization of FAICAR to IMP. Promotes insulin receptor/INSR autophosphorylation and is involved in INSR internalization. In Mus musculus (Mouse), this protein is Bifunctional purine biosynthesis protein ATIC (Atic).